Here is an 809-residue protein sequence, read N- to C-terminus: DNA replication helicase (809 aa).

72–79 (GTAGAGKS) contacts ATP.

The protein belongs to the herpesviridae helicase family. In terms of assembly, associates with the primase and the primase-associated factor to form the helicase-primase complex.

The protein resides in the host nucleus. Its function is as follows. Component of the helicase/primase complex. Unwinds the DNA at the replication forks and generates single-stranded DNA for both leading and lagging strand synthesis. The primase synthesizes short RNA primers on the lagging strand that the polymerase elongates using dNTPs. Possesses helicase-like motifs and therefore may act as the helicase subunit of the complex. In Epstein-Barr virus (strain B95-8) (HHV-4), this protein is DNA replication helicase.